The primary structure comprises 428 residues: Glutamyl-tRNA reductase (428 aa).

Substrate is bound by residues 55–58 (TCNR), S114, 119–121 (ETQ), and Q125. C56 functions as the Nucleophile in the catalytic mechanism. NADP(+) is bound at residue 194–199 (GAGEMI).

It belongs to the glutamyl-tRNA reductase family. As to quaternary structure, homodimer.

The enzyme catalyses (S)-4-amino-5-oxopentanoate + tRNA(Glu) + NADP(+) = L-glutamyl-tRNA(Glu) + NADPH + H(+). It functions in the pathway porphyrin-containing compound metabolism; protoporphyrin-IX biosynthesis; 5-aminolevulinate from L-glutamyl-tRNA(Glu): step 1/2. Catalyzes the NADPH-dependent reduction of glutamyl-tRNA(Glu) to glutamate 1-semialdehyde (GSA). The protein is Glutamyl-tRNA reductase of Paraburkholderia phytofirmans (strain DSM 17436 / LMG 22146 / PsJN) (Burkholderia phytofirmans).